The sequence spans 168 residues: Thioredoxin Y, chloroplastic (168 aa).

A chloroplast-targeting transit peptide spans 1–58 (MAAFTSTTTAAAASPTPCRPAALVARSSAAPLRSAAPVVVAAGLRRAAAPSRRGATLR). Residues 59 to 165 (VQAKKQTFSS…LIQQIESALE (107 aa)) form the Thioredoxin domain. Active-site nucleophile residues include Cys-89 and Cys-92. A disulfide bridge links Cys-89 with Cys-92.

This sequence belongs to the thioredoxin family. Plant Y-type subfamily.

The protein localises to the plastid. Its subcellular location is the chloroplast. Probable thiol-disulfide oxidoreductase that may participate in various redox reactions. This Oryza sativa subsp. japonica (Rice) protein is Thioredoxin Y, chloroplastic.